We begin with the raw amino-acid sequence, 284 residues long: Probable endonuclease 4 (284 aa).

9 residues coordinate Zn(2+): H69, H109, E145, D179, H182, H216, D229, H231, and E261.

Belongs to the AP endonuclease 2 family. Zn(2+) is required as a cofactor.

It carries out the reaction Endonucleolytic cleavage to 5'-phosphooligonucleotide end-products.. Endonuclease IV plays a role in DNA repair. It cleaves phosphodiester bonds at apurinic or apyrimidinic (AP) sites, generating a 3'-hydroxyl group and a 5'-terminal sugar phosphate. The protein is Probable endonuclease 4 of Klebsiella pneumoniae (strain 342).